The chain runs to 100 residues: UPF0473 protein lwe1514 (100 aa).

This sequence belongs to the UPF0473 family.

This chain is UPF0473 protein lwe1514, found in Listeria welshimeri serovar 6b (strain ATCC 35897 / DSM 20650 / CCUG 15529 / CIP 8149 / NCTC 11857 / SLCC 5334 / V8).